The sequence spans 182 residues: ADP-ribosylation factor-like protein 11 (182 aa).

A lipid anchor (N-myristoyl glycine) is attached at G2. Residues 19-26, 63-67, and 122-125 each bind GTP; these read GLDSAGKT, DVGGQ, and NKQE.

This sequence belongs to the small GTPase superfamily. Arf family.

Functionally, may play a role in apoptosis. May act as a tumor suppressor. This is ADP-ribosylation factor-like protein 11 (ARL11) from Bos taurus (Bovine).